Consider the following 203-residue polypeptide: Ras-related protein Rab-13 (203 aa).

7 residues coordinate GTP: serine 17, glycine 18, glycine 20, lysine 21, threonine 22, cysteine 23, and threonine 40. Threonine 22 is a binding site for Mg(2+). The Switch 1 signature appears at 31-45; that stretch reads DNFNSTYISTIGIDF. Threonine 40 is a Mg(2+) binding site. Residues lysine 46 and lysine 58 each participate in a glycyl lysine isopeptide (Lys-Gly) (interchain with G-Cter in ubiquitin) cross-link. Mg(2+) is bound at residue aspartate 63. A Switch 2 motif is present at residues 63–80; it reads DTAGQERFKTITTAYYRG. GTP-binding residues include glycine 66, asparagine 121, lysine 122, aspartate 124, alanine 152, and lysine 153. The disordered stretch occupies residues 173-203; sequence TGGRRSGNSSKPSSTDLKVSDKKNSNKCSLG. Serine 178 carries the post-translational modification Phosphoserine. The span at 178–189 shows a compositional bias: polar residues; that stretch reads SGNSSKPSSTDL. Cysteine 200 is modified (cysteine methyl ester). Cysteine 200 is lipidated: S-geranylgeranyl cysteine. A propeptide spans 201–203 (removed in mature form); the sequence is SLG.

This sequence belongs to the small GTPase superfamily. Rab family. Interacts (GTP-bound form) with MICALL2; competes with RAB8A and is involved in tight junctions assembly. Interacts (GTP-bound form) with MICALL1. Interacts (GTP-bound form) with MICAL1, MICAL3, MICALCL, EHBP1 and EHBP1L1; ternary complexes of RAB8A, RAB13 and either MICAL1 or EHBP1L1 are possible. Interacts with PRKACA; downstream effector of RAB13 involved in tight junction assembly. Interacts with GRB2; may recruit RAB13 to the leading edge of migrating endothelial cells where it can activate RHOA. Interacts (isoprenylated form) with PDE6D; dissociates RAB13 from membranes. Interacts with BICDL2/BICDR2. Interacts with LEPROT and LEPROTL1. Requires Mg(2+) as cofactor. In terms of processing, ubiquitinated via 'Lys-11'-linked ubiquitination on Lys-46 and Lys-58; impairing the recruitment of guanosine diphosphate (GDP) dissociation inhibitor 1/GDI1. As to expression, highest levels found in lung, kidney, whole brain and spinal cord. Expressed in all tissues tested including Sertoli and germ cells (at protein level). Also detected in osteoclasts.

It is found in the cell membrane. The protein localises to the cytoplasmic vesicle membrane. The protein resides in the cell junction. It localises to the tight junction. Its subcellular location is the golgi apparatus. It is found in the trans-Golgi network membrane. The protein localises to the recycling endosome membrane. The protein resides in the cell projection. It localises to the lamellipodium. The catalysed reaction is GTP + H2O = GDP + phosphate + H(+). Its activity is regulated as follows. Regulated by guanine nucleotide exchange factors (GEFs) including DENND1C, which promote the exchange of bound GDP for free GTP. Regulated by GTPase activating proteins (GAPs) which increase the GTP hydrolysis activity. Inhibited by GDP dissociation inhibitors (GDIs). Activated in response to insulin. Its function is as follows. The small GTPases Rab are key regulators of intracellular membrane trafficking, from the formation of transport vesicles to their fusion with membranes. Rabs cycle between an inactive GDP-bound form and an active GTP-bound form that is able to recruit to membranes different sets of downstream effectors directly responsible for vesicle formation, movement, tethering and fusion. RAB13 is involved in endocytic recycling and regulates the transport to the plasma membrane of transmembrane proteins like the tight junction protein OCLN/occludin. Thereby, it regulates the assembly and the activity of tight junctions. Moreover, it may also regulate tight junction assembly by activating the PKA signaling pathway and by reorganizing the actin cytoskeleton through the activation of the downstream effectors PRKACA and MICALL2 respectively. Through its role in tight junction assembly, may play a role in the establishment of Sertoli cell barrier. Plays also a role in angiogenesis through regulation of endothelial cells chemotaxis. Also involved in neurite outgrowth. Has also been proposed to play a role in post-Golgi membrane trafficking from the TGN to the recycling endosome. Finally, it has been involved in insulin-induced transport to the plasma membrane of the glucose transporter GLUT4 and therefore may play a role in glucose homeostasis. In Rattus norvegicus (Rat), this protein is Ras-related protein Rab-13.